Reading from the N-terminus, the 256-residue chain is Imidazole glycerol phosphate synthase subunit HisF (256 aa).

Residues D11 and D130 contribute to the active site.

It belongs to the HisA/HisF family. As to quaternary structure, heterodimer of HisH and HisF.

It is found in the cytoplasm. The enzyme catalyses 5-[(5-phospho-1-deoxy-D-ribulos-1-ylimino)methylamino]-1-(5-phospho-beta-D-ribosyl)imidazole-4-carboxamide + L-glutamine = D-erythro-1-(imidazol-4-yl)glycerol 3-phosphate + 5-amino-1-(5-phospho-beta-D-ribosyl)imidazole-4-carboxamide + L-glutamate + H(+). It functions in the pathway amino-acid biosynthesis; L-histidine biosynthesis; L-histidine from 5-phospho-alpha-D-ribose 1-diphosphate: step 5/9. Functionally, IGPS catalyzes the conversion of PRFAR and glutamine to IGP, AICAR and glutamate. The HisF subunit catalyzes the cyclization activity that produces IGP and AICAR from PRFAR using the ammonia provided by the HisH subunit. The chain is Imidazole glycerol phosphate synthase subunit HisF from Thioalkalivibrio sulfidiphilus (strain HL-EbGR7).